A 274-amino-acid polypeptide reads, in one-letter code: Orotidine 5'-phosphate decarboxylase (274 aa).

The Proton donor role is filled by Lys-95.

This sequence belongs to the OMP decarboxylase family. Type 2 subfamily.

It catalyses the reaction orotidine 5'-phosphate + H(+) = UMP + CO2. Its pathway is pyrimidine metabolism; UMP biosynthesis via de novo pathway; UMP from orotate: step 2/2. This Mycobacterium avium (strain 104) protein is Orotidine 5'-phosphate decarboxylase.